Consider the following 201-residue polypeptide: Syndecan-2 (201 aa).

A signal peptide spans 1 to 18 (MRRAWILLTLGLVACVSA). Residues 19-144 (ESRAELTSDK…HSDSLFKRTE (126 aa)) are Extracellular-facing. 3 O-linked (Xyl...) (glycosaminoglycan) serine glycosylation sites follow: Ser-41, Ser-55, and Ser-57. 2 disordered regions span residues 42-70 (GVYPIDDDDYASASGSGADEDVESPELTT) and 90-130 (TLNI…DTNV). Residues 90 to 102 (TLNIQNKIPAQTK) are compositionally biased toward polar residues. The O-linked (GalNAc...) threonine glycan is linked to Thr-101. Residues 103 to 123 (SPEETDKEKVHLSDSERKMDP) show a composition bias toward basic and acidic residues. Ser-115 bears the Phosphoserine; by FAM20C mark. A helical transmembrane segment spans residues 145–169 (VLAAVIAGGVIGFLFAIFLILLLVY). Residues 170–201 (RMRKKDEGSYDLGERKPSSAAYQKAPTKEFYA) lie on the Cytoplasmic side of the membrane. A disordered region spans residues 178–201 (SYDLGERKPSSAAYQKAPTKEFYA). Phosphoserine is present on Ser-187.

It belongs to the syndecan proteoglycan family. Interacts (via cytoplasmic domain) with SARM1. Forms a complex with SDCBP and PDCD6IP. O-glycosylated with core 1 or possibly core 8 glycans. Contains heparan sulfate. Also contains chondroitin sulfate.

The protein resides in the membrane. Cell surface proteoglycan which regulates dendritic arbor morphogenesis. The sequence is that of Syndecan-2 (SDC2) from Homo sapiens (Human).